Reading from the N-terminus, the 299-residue chain is ATP phosphoribosyltransferase (299 aa).

This sequence belongs to the ATP phosphoribosyltransferase family. Long subfamily. Mg(2+) is required as a cofactor.

It localises to the cytoplasm. It carries out the reaction 1-(5-phospho-beta-D-ribosyl)-ATP + diphosphate = 5-phospho-alpha-D-ribose 1-diphosphate + ATP. The protein operates within amino-acid biosynthesis; L-histidine biosynthesis; L-histidine from 5-phospho-alpha-D-ribose 1-diphosphate: step 1/9. Feedback inhibited by histidine. Its function is as follows. Catalyzes the condensation of ATP and 5-phosphoribose 1-diphosphate to form N'-(5'-phosphoribosyl)-ATP (PR-ATP). Has a crucial role in the pathway because the rate of histidine biosynthesis seems to be controlled primarily by regulation of HisG enzymatic activity. The protein is ATP phosphoribosyltransferase of Shewanella denitrificans (strain OS217 / ATCC BAA-1090 / DSM 15013).